The primary structure comprises 78 residues: uncharacterized protein (78 aa).

This is an uncharacterized protein from Escherichia coli O6:H1 (strain CFT073 / ATCC 700928 / UPEC).